Here is a 491-residue protein sequence, read N- to C-terminus: Glutamyl-tRNA(Gln) amidotransferase subunit A (491 aa).

Residues K78 and S158 each act as charge relay system in the active site. Residue S182 is the Acyl-ester intermediate of the active site.

The protein belongs to the amidase family. GatA subfamily. In terms of assembly, heterotrimer of A, B and C subunits.

It carries out the reaction L-glutamyl-tRNA(Gln) + L-glutamine + ATP + H2O = L-glutaminyl-tRNA(Gln) + L-glutamate + ADP + phosphate + H(+). Its function is as follows. Allows the formation of correctly charged Gln-tRNA(Gln) through the transamidation of misacylated Glu-tRNA(Gln) in organisms which lack glutaminyl-tRNA synthetase. The reaction takes place in the presence of glutamine and ATP through an activated gamma-phospho-Glu-tRNA(Gln). This is Glutamyl-tRNA(Gln) amidotransferase subunit A from Nitrobacter winogradskyi (strain ATCC 25391 / DSM 10237 / CIP 104748 / NCIMB 11846 / Nb-255).